A 563-amino-acid chain; its full sequence is Protein disulfide isomerase-like 1-4 (563 aa).

Positions 1–22 are cleaved as a signal peptide; the sequence is MRSRSLLLVALATLLLHASASA. The segment at 40-64 is disordered; the sequence is NDPDGWLQEGSPDDDDDDDLFHHGQ. The region spanning 46 to 180 is the Thioredoxin 1 domain; the sequence is LQEGSPDDDD…IVSWVNKKLA (135 aa). A glycan (N-linked (GlcNAc...) asparagine) is linked at Asn-82. Residues Cys-102 and Cys-105 each act as nucleophile in the active site. Cys-102 and Cys-105 are oxidised to a cystine. Residues Asn-185 and Asn-315 are each glycosylated (N-linked (GlcNAc...) asparagine). Positions 394–523 constitute a Thioredoxin 2 domain; that stretch reads FLEEKLTPFY…MYKFIKKHAS (130 aa). Active-site nucleophile residues include Cys-444 and Cys-447. Cys-444 and Cys-447 are oxidised to a cystine. Basic and acidic residues predominate over residues 529–542; that stretch reads KRPDSSATKTEKDQ. The tract at residues 529–563 is disordered; it reads KRPDSSATKTEKDQSTASTNLRGERSSGTNFKDEL. Over residues 543-563 the composition is skewed to polar residues; the sequence is STASTNLRGERSSGTNFKDEL. The Prevents secretion from ER signature appears at 560-563; the sequence is KDEL.

It belongs to the protein disulfide isomerase family.

The protein localises to the endoplasmic reticulum lumen. It carries out the reaction Catalyzes the rearrangement of -S-S- bonds in proteins.. Acts as a protein-folding catalyst that interacts with nascent polypeptides to catalyze the formation, isomerization, and reduction or oxidation of disulfide bonds. May play a role in storage protein biogenesis. The sequence is that of Protein disulfide isomerase-like 1-4 (PDIL1-4) from Oryza sativa subsp. japonica (Rice).